A 218-amino-acid polypeptide reads, in one-letter code: dTTP/UTP pyrophosphatase (218 aa).

Polar residues predominate over residues 1–10 (MTASPSSAEG). The tract at residues 1 to 20 (MTASPSSAEGSSGLPDRPKL) is disordered. Asp-87 serves as the catalytic Proton acceptor.

The protein belongs to the Maf family. YhdE subfamily. Requires a divalent metal cation as cofactor.

Its subcellular location is the cytoplasm. The enzyme catalyses dTTP + H2O = dTMP + diphosphate + H(+). It carries out the reaction UTP + H2O = UMP + diphosphate + H(+). In terms of biological role, nucleoside triphosphate pyrophosphatase that hydrolyzes dTTP and UTP. May have a dual role in cell division arrest and in preventing the incorporation of modified nucleotides into cellular nucleic acids. This Gluconobacter oxydans (strain 621H) (Gluconobacter suboxydans) protein is dTTP/UTP pyrophosphatase.